Reading from the N-terminus, the 198-residue chain is MTASTTINKGDSPNGDSSASSVLHQKVLGSRRFSNYWWASIVTLGASGFLLAGISSYLKVNLLIVTDPTQLIFVPQGLVMGLYGTAGLLLASYLWLAILWDLGGGYNDFNRETGNIKIFRWGFPGKNRKIEIGSRIQDIQSVRIDIKEGLNPRRALYLRVKGRRDIPLTRVGQPLSLAELETQGAQLARFLGVPLEGL.

Residues 1-20 are disordered; the sequence is MTASTTINKGDSPNGDSSAS. A run of 2 helical transmembrane segments spans residues 38 to 58 and 78 to 98; these read WASI…SSYL and LVMG…WLAI.

Belongs to the Ycf4 family.

The protein resides in the cellular thylakoid membrane. Functionally, seems to be required for the assembly of the photosystem I complex. This is Photosystem I assembly protein Ycf4 from Trichormus variabilis (strain ATCC 29413 / PCC 7937) (Anabaena variabilis).